Here is a 367-residue protein sequence, read N- to C-terminus: UDP-N-acetylglucosamine--N-acetylmuramyl-(pentapeptide) pyrophosphoryl-undecaprenol N-acetylglucosamine transferase (367 aa).

UDP-N-acetyl-alpha-D-glucosamine contacts are provided by residues 15-17 (TGG), Asn127, Arg163, Ser191, Ile249, and Gln294.

Belongs to the glycosyltransferase 28 family. MurG subfamily.

The protein localises to the cell inner membrane. It carries out the reaction di-trans,octa-cis-undecaprenyl diphospho-N-acetyl-alpha-D-muramoyl-L-alanyl-D-glutamyl-meso-2,6-diaminopimeloyl-D-alanyl-D-alanine + UDP-N-acetyl-alpha-D-glucosamine = di-trans,octa-cis-undecaprenyl diphospho-[N-acetyl-alpha-D-glucosaminyl-(1-&gt;4)]-N-acetyl-alpha-D-muramoyl-L-alanyl-D-glutamyl-meso-2,6-diaminopimeloyl-D-alanyl-D-alanine + UDP + H(+). It participates in cell wall biogenesis; peptidoglycan biosynthesis. In terms of biological role, cell wall formation. Catalyzes the transfer of a GlcNAc subunit on undecaprenyl-pyrophosphoryl-MurNAc-pentapeptide (lipid intermediate I) to form undecaprenyl-pyrophosphoryl-MurNAc-(pentapeptide)GlcNAc (lipid intermediate II). The polypeptide is UDP-N-acetylglucosamine--N-acetylmuramyl-(pentapeptide) pyrophosphoryl-undecaprenol N-acetylglucosamine transferase (Burkholderia multivorans (strain ATCC 17616 / 249)).